The following is a 362-amino-acid chain: Phosphoserine aminotransferase (362 aa).

The L-glutamate site is built by S9 and R42. Residues 76-77 (GR), W102, T153, D174, and Q197 contribute to the pyridoxal 5'-phosphate site. K198 carries the N6-(pyridoxal phosphate)lysine modification. A pyridoxal 5'-phosphate-binding site is contributed by 239-240 (NT).

This sequence belongs to the class-V pyridoxal-phosphate-dependent aminotransferase family. SerC subfamily. In terms of assembly, homodimer. It depends on pyridoxal 5'-phosphate as a cofactor.

The protein localises to the cytoplasm. It carries out the reaction O-phospho-L-serine + 2-oxoglutarate = 3-phosphooxypyruvate + L-glutamate. It catalyses the reaction 4-(phosphooxy)-L-threonine + 2-oxoglutarate = (R)-3-hydroxy-2-oxo-4-phosphooxybutanoate + L-glutamate. It participates in amino-acid biosynthesis; L-serine biosynthesis; L-serine from 3-phospho-D-glycerate: step 2/3. Its pathway is cofactor biosynthesis; pyridoxine 5'-phosphate biosynthesis; pyridoxine 5'-phosphate from D-erythrose 4-phosphate: step 3/5. Functionally, catalyzes the reversible conversion of 3-phosphohydroxypyruvate to phosphoserine and of 3-hydroxy-2-oxo-4-phosphonooxybutanoate to phosphohydroxythreonine. This is Phosphoserine aminotransferase from Escherichia fergusonii (strain ATCC 35469 / DSM 13698 / CCUG 18766 / IAM 14443 / JCM 21226 / LMG 7866 / NBRC 102419 / NCTC 12128 / CDC 0568-73).